Here is a 96-residue protein sequence, read N- to C-terminus: Large ribosomal subunit protein bL27 (96 aa).

The disordered stretch occupies residues 12–33 (HKGGGSSANGRNSAGRRLGAKA). Low complexity predominate over residues 19–28 (ANGRNSAGRR).

Belongs to the bacterial ribosomal protein bL27 family.

The sequence is that of Large ribosomal subunit protein bL27 from Lactobacillus helveticus (strain DPC 4571).